The chain runs to 545 residues: EH domain-containing protein 1 (545 aa).

2 consecutive EF-hand domains span residues 14-49 (ENQM…SNLP) and 50-83 (RPEL…VSLA). Residues 15-93 (NQMIYKEWFE…QTGHEISHEV (79 aa)) enclose the EH domain. Residues Asp27, Asp29, Asp31, Arg33, Asp38, Asp61, Tyr67, and Glu72 each coordinate Ca(2+). The region spanning 194 to 429 (FDAKPMVMLL…DLLADLKDIP (236 aa)) is the Dynamin-type G domain. The G1 motif stretch occupies residues 204–211 (GQYSTGKT). 204–211 (GQYSTGKT) lines the GTP pocket. The segment at 230-231 (EP) is G2 motif. Positions 292–295 (DTPG) are G3 motif. GTP-binding positions include 309-313 (DFTGV) and Lys359. The interval 358–361 (NKAD) is G4 motif. A region of interest (G5 motif) is located at residue Val382. GTP is bound at residue 395–398 (SFSD). The stretch at 467-490 (KAKAQQKLIDNLEDEFGKVQREHH) forms a coiled coil.

It belongs to the TRAFAC class dynamin-like GTPase superfamily. Dynamin/Fzo/YdjA family. EHD subfamily. As to quaternary structure, homooligomer, and heterooligomer with EHD2.

Its subcellular location is the endosome membrane. It localises to the cell membrane. The protein localises to the cytoplasm. It catalyses the reaction GTP + H2O = GDP + phosphate + H(+). Its function is as follows. Involved in endocytosis positive regulation. Acts in early endocytic membrane fusion and membrane trafficking of recycling endosomes. Confers salt tolerance. The protein is EH domain-containing protein 1 of Arabidopsis thaliana (Mouse-ear cress).